The primary structure comprises 236 residues: Probable transcriptional regulatory protein Suden_1389 (236 aa).

It belongs to the TACO1 family.

The protein localises to the cytoplasm. This is Probable transcriptional regulatory protein Suden_1389 from Sulfurimonas denitrificans (strain ATCC 33889 / DSM 1251) (Thiomicrospira denitrificans (strain ATCC 33889 / DSM 1251)).